The chain runs to 394 residues: Suppressor APC domain-containing protein 2 (394 aa).

3 disordered regions span residues 1–23, 95–125, and 150–188; these read MAGA…STEG, LLSA…RLVF, and GPSA…SSSA. The span at 177–188 shows a compositional bias: polar residues; the sequence is SQSAALEPSSSA. At T219 the chain carries Phosphothreonine. Positions 227 to 277 form a coiled coil; sequence GLLKQMKELEQEKEVLLQGLEMMARGRDWYQQQLQRVQERQRRLGQSRASA. S284 is subject to Phosphoserine. Positions 336–384 form a coiled coil; it reads QQQTILMLKEQNRLLTQEVTEKSERITQLEQEKSALIKQLFEARALSQQ.

In terms of assembly, interacts with a spindle orientation complex at least composed of GNAI1, GPSM2 and NUMA1. Interacts with GPSM2 (via TPR motifs); this interaction is required to prevent GPSM2 anchoring at the mitotic apical cortex and is inhibited in presence of NUMA1 in a dose dependent manner. Interacts with PARD3. Expressed in 5-month-old fetal tissues, including stomach, intestine, colon, liver, brain, lung, heart, spleen and kidney. Undetectable in non-cancerous adult tissues. Expressed in many primary gastric carcinoma, but almost not in adjacent normal mucosa. Expressed preferentially in M and G1 phases, compared to S and G2 phases. Expression is up-regulated in hepatocellular carcinoma (HCC) and colorectal cancer (CRC) tissues (at protein level).

Its subcellular location is the cytoplasm. It is found in the nucleus. It localises to the cell cortex. The protein resides in the apical cell membrane. The protein localises to the cell junction. Its subcellular location is the tight junction. Plays a role in planar mitotic spindle orientation in retinal progenitor cells (RPCs) and promotes the production of symmetric terminal divisions. Negatively regulates the mitotic apical cortex localization of GPSM2. Involved also in positive regulation of cell proliferation and tumor cell growth. This Homo sapiens (Human) protein is Suppressor APC domain-containing protein 2.